The sequence spans 252 residues: 5-oxoprolinase subunit A 1 (252 aa).

Belongs to the LamB/PxpA family. Forms a complex composed of PxpA, PxpB and PxpC.

The enzyme catalyses 5-oxo-L-proline + ATP + 2 H2O = L-glutamate + ADP + phosphate + H(+). Functionally, catalyzes the cleavage of 5-oxoproline to form L-glutamate coupled to the hydrolysis of ATP to ADP and inorganic phosphate. This chain is 5-oxoprolinase subunit A 1, found in Bordetella bronchiseptica (strain ATCC BAA-588 / NCTC 13252 / RB50) (Alcaligenes bronchisepticus).